The sequence spans 356 residues: MFEAIIYNISVMVAGIYLFHRLQYSENKRMIFSKEYVTVLMTFVSLLLAAYPIPFQNEYLVHLTFVPLLFLGRYTNMIYTLTAAFIVSLVDVFIFGNSIIYGITLIVIAGIVSAVGPFLKQNDIISLLILNLISIIILLFLALLSPIYELVEILVLIPISFIITIASAITFVDIWHFFSLVNRYENEDKYDYLTGLGNVKEFDRHLNEVSSKAEEKKQSLALLLIDIDGFKDVNDHYSHQSGDAVLKQMSQLLKNYVPNQFKIFRNGGEEFSVVIRDYTLDQSVKLAENIRSGVEKSSFHLPNKEVIKLSVSIGVGYLTQEDRKSQRKVFKDADDMVHVAKSEGRNKVMFNPIVKL.

Transmembrane regions (helical) follow at residues 2–22 (FEAI…FHRL), 35–55 (EYVT…PIPF), 76–96 (NMIY…FIFG), 99–119 (IIYG…GPFL), 124–144 (IISL…LALL), and 151–171 (VEIL…AITF). Positions 218-353 (QSLALLLIDI…GRNKVMFNPI (136 aa)) constitute a GGDEF domain.

It localises to the cell membrane. This is an uncharacterized protein from Staphylococcus epidermidis (strain ATCC 35984 / DSM 28319 / BCRC 17069 / CCUG 31568 / BM 3577 / RP62A).